Here is a 947-residue protein sequence, read N- to C-terminus: Serine-aspartate repeat-containing protein C (947 aa).

Residues Met1–Ala50 form the signal peptide. A disordered region spans residues Ala51–Lys164. The ligand binding A region stretch occupies residues Ala51–Lys495. Residues Gly56 to Asn71 are compositionally biased toward polar residues. A compositionally biased stretch (basic and acidic residues) spans Lys72–Lys83. Residues Asp84–Ser155 are compositionally biased toward polar residues. 2 consecutive CNA-B domains span residues Lys496–Pro606 and Lys607–Thr717. The disordered stretch occupies residues Thr678–Gly927. Composition is skewed to acidic residues over residues Thr685–Glu695 and Tyr712–Ser886. The LPXTG sorting signal signature appears at Leu910–Gly914. Low complexity predominate over residues Glu912–Gly927. Thr913 is subject to Pentaglycyl murein peptidoglycan amidated threonine. Positions Gly914–Lys947 are cleaved as a propeptide — removed by sortase.

Belongs to the serine-aspartate repeat-containing protein (SDr) family. As to quaternary structure, homodimerizes; via N2-Domain. Interacts with host NRXN1; this interaction mediates bacterial attachment to host cells.

Its subcellular location is the secreted. It localises to the cell wall. Functionally, cell surface-associated calcium-binding protein which plays an important role in adhesion and pathogenesis. Mediates interactions with components of the extracellular matrix such as host NRXN1 to promote bacterial adhesion. In Staphylococcus aureus (strain COL), this protein is Serine-aspartate repeat-containing protein C (sdrC).